Reading from the N-terminus, the 429-residue chain is Mannose-6-phosphate isomerase (429 aa).

Zn(2+) contacts are provided by Gln110, His112, Glu137, and His282. Arg301 is a catalytic residue.

This sequence belongs to the mannose-6-phosphate isomerase type 1 family. Zn(2+) serves as cofactor.

Its subcellular location is the cytoplasm. The catalysed reaction is D-mannose 6-phosphate = D-fructose 6-phosphate. Its pathway is nucleotide-sugar biosynthesis; GDP-alpha-D-mannose biosynthesis; alpha-D-mannose 1-phosphate from D-fructose 6-phosphate: step 1/2. In terms of biological role, involved in the synthesis of the GDP-mannose and dolichol-phosphate-mannose required for a number of critical mannosyl transfer reactions. The chain is Mannose-6-phosphate isomerase (PMI1) from Candida glabrata (strain ATCC 2001 / BCRC 20586 / JCM 3761 / NBRC 0622 / NRRL Y-65 / CBS 138) (Yeast).